Consider the following 248-residue polypeptide: NH(3)-dependent NAD(+) synthetase (248 aa).

31–38 is an ATP binding site; it reads GLSGGVDS. Aspartate 37 contributes to the Mg(2+) binding site. Position 114 (arginine 114) interacts with deamido-NAD(+). Threonine 134 serves as a coordination point for ATP. Glutamate 139 contacts Mg(2+). Residues lysine 147 and aspartate 154 each contribute to the deamido-NAD(+) site. Residues lysine 163 and threonine 185 each contribute to the ATP site. 232–233 lines the deamido-NAD(+) pocket; it reads HK.

This sequence belongs to the NAD synthetase family. Homodimer.

The catalysed reaction is deamido-NAD(+) + NH4(+) + ATP = AMP + diphosphate + NAD(+) + H(+). The protein operates within cofactor biosynthesis; NAD(+) biosynthesis; NAD(+) from deamido-NAD(+) (ammonia route): step 1/1. In terms of biological role, catalyzes the ATP-dependent amidation of deamido-NAD to form NAD. Uses ammonia as a nitrogen source. The chain is NH(3)-dependent NAD(+) synthetase from Mycoplasma pneumoniae (strain ATCC 29342 / M129 / Subtype 1) (Mycoplasmoides pneumoniae).